Consider the following 216-residue polypeptide: Redox-sensing transcriptional repressor Rex (216 aa).

A DNA-binding region (H-T-H motif) is located at residues 15–54 (KYLRVTQQLIEEGRDAVSSKELGDFTGINPVQVRRDLNAI). 89-94 (GAGNLG) is an NAD(+) binding site.

Belongs to the transcriptional regulatory Rex family. Homodimer.

It is found in the cytoplasm. Modulates transcription in response to changes in cellular NADH/NAD(+) redox state. This Rubrobacter xylanophilus (strain DSM 9941 / JCM 11954 / NBRC 16129 / PRD-1) protein is Redox-sensing transcriptional repressor Rex.